The primary structure comprises 260 residues: Transcription repressor OFP13 (260 aa).

The region spanning 150-211 is the OVATE domain; it reads VAMESEDPYG…VSAFVDLLSG (62 aa).

As to expression, expressed in roots, rosette and cauline leaves, shoots, stems, flower buds and siliques.

The protein resides in the nucleus. In terms of biological role, transcriptional repressor that regulates multiple aspects of plant growth and development through the regulation of BEL1-LIKE (BLH) and KNOX TALE (KNAT) homeodomain transcription factors. The chain is Transcription repressor OFP13 (OFP13) from Arabidopsis thaliana (Mouse-ear cress).